We begin with the raw amino-acid sequence, 331 residues long: Glycerol-3-phosphate dehydrogenase [NAD(P)+] (331 aa).

Positions 11, 30, and 105 each coordinate NADPH. Sn-glycerol 3-phosphate-binding residues include Lys-105, Gly-134, and Ser-136. An NADPH-binding site is contributed by Ala-138. Lys-189, Asp-242, Ser-252, Arg-253, and Asn-254 together coordinate sn-glycerol 3-phosphate. The Proton acceptor role is filled by Lys-189. Arg-253 serves as a coordination point for NADPH. NADPH is bound by residues Val-277 and Glu-279.

Belongs to the NAD-dependent glycerol-3-phosphate dehydrogenase family.

The protein localises to the cytoplasm. It carries out the reaction sn-glycerol 3-phosphate + NAD(+) = dihydroxyacetone phosphate + NADH + H(+). The catalysed reaction is sn-glycerol 3-phosphate + NADP(+) = dihydroxyacetone phosphate + NADPH + H(+). It participates in membrane lipid metabolism; glycerophospholipid metabolism. In terms of biological role, catalyzes the reduction of the glycolytic intermediate dihydroxyacetone phosphate (DHAP) to sn-glycerol 3-phosphate (G3P), the key precursor for phospholipid synthesis. This is Glycerol-3-phosphate dehydrogenase [NAD(P)+] from Herminiimonas arsenicoxydans.